The chain runs to 208 residues: Uracil phosphoribosyltransferase (208 aa).

5-phospho-alpha-D-ribose 1-diphosphate contacts are provided by residues Arg78, Arg103, and 130 to 138; that span reads DPMLATGGS. Uracil contacts are provided by residues Ile193 and 198–200; that span reads GDA. Asp199 is a binding site for 5-phospho-alpha-D-ribose 1-diphosphate.

It belongs to the UPRTase family. Mg(2+) is required as a cofactor.

It carries out the reaction UMP + diphosphate = 5-phospho-alpha-D-ribose 1-diphosphate + uracil. The protein operates within pyrimidine metabolism; UMP biosynthesis via salvage pathway; UMP from uracil: step 1/1. Its activity is regulated as follows. Allosterically activated by GTP. Its function is as follows. Catalyzes the conversion of uracil and 5-phospho-alpha-D-ribose 1-diphosphate (PRPP) to UMP and diphosphate. The polypeptide is Uracil phosphoribosyltransferase (Enterobacter sp. (strain 638)).